Consider the following 308-residue polypeptide: Neurexophilin-4 (308 aa).

The signal sequence occupies residues 1–23; it reads MRLLPEWFLLLFGPWLLRKAVSA. The segment at 24 to 84 is II; that stretch reads QIPESGRPQY…GALARAGAAG (61 aa). Positions 40 to 51 are enriched in low complexity; it reads AAGAGAPGQQLP. The disordered stretch occupies residues 40–59; the sequence is AAGAGAPGQQLPEPRSSDGL. Asn72, Asn133, Asn143, and Asn149 each carry an N-linked (GlcNAc...) asparagine glycan. Positions 85 to 163 are III; the sequence is ALPAQRTKRK…IVPPSKRVEF (79 aa). Residues 164-224 form an IV (linker domain) region; sequence GGVWLPGPVP…PLGGALGVPG (61 aa). A v (Cys-rich) region spans residues 225–308; the sequence is AKESRAFNCH…NFQSEHPYFG (84 aa).

The protein belongs to the neurexophilin family. May be proteolytically processed at the boundary between the N-terminal non-conserved and the central conserved domain in neuron-like cells. In terms of tissue distribution, expressed in brain, spleen, and testis.

It is found in the secreted. Its function is as follows. May be signaling molecules that resemble neuropeptides and that act by binding to alpha-neurexins and possibly other receptors. In Homo sapiens (Human), this protein is Neurexophilin-4 (NXPH4).